The primary structure comprises 136 residues: 6,7-dimethyl-8-ribityllumazine synthase (136 aa).

Residues phenylalanine 11, 43 to 45 (VYD), and 67 to 69 (CVI) contribute to the 5-amino-6-(D-ribitylamino)uracil site. 72–73 (DT) is a binding site for (2S)-2-hydroxy-3-oxobutyl phosphate. The Proton donor role is filled by histidine 75. Leucine 100 is a binding site for 5-amino-6-(D-ribitylamino)uracil. Arginine 115 provides a ligand contact to (2S)-2-hydroxy-3-oxobutyl phosphate.

Belongs to the DMRL synthase family. Forms an icosahedral capsid composed of 60 subunits, arranged as a dodecamer of pentamers.

The catalysed reaction is (2S)-2-hydroxy-3-oxobutyl phosphate + 5-amino-6-(D-ribitylamino)uracil = 6,7-dimethyl-8-(1-D-ribityl)lumazine + phosphate + 2 H2O + H(+). It participates in cofactor biosynthesis; riboflavin biosynthesis; riboflavin from 2-hydroxy-3-oxobutyl phosphate and 5-amino-6-(D-ribitylamino)uracil: step 1/2. Its function is as follows. Catalyzes the formation of 6,7-dimethyl-8-ribityllumazine by condensation of 5-amino-6-(D-ribitylamino)uracil with 3,4-dihydroxy-2-butanone 4-phosphate. This is the penultimate step in the biosynthesis of riboflavin. In Methanococcus aeolicus (strain ATCC BAA-1280 / DSM 17508 / OCM 812 / Nankai-3), this protein is 6,7-dimethyl-8-ribityllumazine synthase.